The following is a 391-amino-acid chain: Serine acetyltransferase 3, mitochondrial (391 aa).

Disordered regions lie at residues lysine 40–glutamate 82 and valine 353–leucine 375. Pro residues predominate over residues serine 45–methionine 56.

This sequence belongs to the transferase hexapeptide repeat family. In terms of assembly, homomultimer. Interacts with OASC. Component of the cysteine synthase complex (CSC) composed of two OAS-TL dimers and one SAT hexamer. As to expression, ubiquitous with higher levels in leaves and siliques. Localized in vascular tissues, particularly in phloem.

The protein localises to the mitochondrion. It carries out the reaction L-serine + acetyl-CoA = O-acetyl-L-serine + CoA. Its pathway is amino-acid biosynthesis; L-cysteine biosynthesis; L-cysteine from L-serine: step 1/2. The chain is Serine acetyltransferase 3, mitochondrial (SAT3) from Arabidopsis thaliana (Mouse-ear cress).